Consider the following 238-residue polypeptide: Protein MIS12 homolog (238 aa).

Residues 117-149 (ELDAELDSLRDKLNVVGKRSVELDSELQALERS) adopt a coiled-coil conformation.

Belongs to the mis12 family.

The protein localises to the chromosome. It is found in the centromere. Its subcellular location is the kinetochore. Functionally, constitutive component of kinetochores that is essential for proper cell division during mitotic cell cycle. May play a role in the modulation of centromere during meiosis. This chain is Protein MIS12 homolog, found in Arabidopsis thaliana (Mouse-ear cress).